Consider the following 237-residue polypeptide: NAD-dependent protein deacetylase (237 aa).

The Deacetylase sirtuin-type domain maps to M1–E237. Positions 25, 29, 37, 100, 102, 103, and 118 each coordinate NAD(+). 2 residues coordinate nicotinamide: I102 and D103. The active-site Proton acceptor is H118. Zn(2+) contacts are provided by C126, C129, H144, and C147. 3 residues coordinate NAD(+): T185, S186, and N209.

Belongs to the sirtuin family. Class U subfamily.

Its subcellular location is the cytoplasm. The enzyme catalyses N(6)-acetyl-L-lysyl-[protein] + NAD(+) + H2O = 2''-O-acetyl-ADP-D-ribose + nicotinamide + L-lysyl-[protein]. NAD-dependent protein deacetylase which modulates the activities of several enzymes which are inactive in their acetylated form. In Enterococcus faecalis (strain ATCC 700802 / V583), this protein is NAD-dependent protein deacetylase.